Reading from the N-terminus, the 536-residue chain is Putative ATP-dependent RNA helicase L364 (536 aa).

The Helicase ATP-binding domain occupies 47–214; it reads ISILLKYFLV…IPFYLMNFIP (168 aa). ATP is bound at residue 60-67; sequence SDTGVGKT. The DEAH box motif lies at 160–163; that stretch reads DESH. Residues 288-334 adopt a coiled-coil conformation; that stretch reads LSDDSDKIAEAYEEIAELMRELEEKKTQCKNHLAKIQKLKQEIELRK. In terms of domain architecture, Helicase C-terminal spans 338 to 486; sequence FIEQTQLYLE…ISAINDGDLE (149 aa). The tract at residues 502–536 is disordered; it reads VLNEPVNNPIEEPVNDPVKDPVEDLTDNQPNIVEV.

The protein belongs to the DEAD box helicase family. DEAH subfamily.

The catalysed reaction is ATP + H2O = ADP + phosphate + H(+). The chain is Putative ATP-dependent RNA helicase L364 from Acanthamoeba polyphaga (Amoeba).